A 979-amino-acid polypeptide reads, in one-letter code: Putative disease resistance protein RGA1 (979 aa).

The NB-ARC domain occupies 143–437 (GSVLTEPQVY…MAHGFLLSKG (295 aa)). 182–189 (GMGGLGKT) is a binding site for ATP. LRR repeat units lie at residues 524–547 (FVSL…IGDL), 549–570 (HLRY…RLCK), 571–594 (LQNL…QTSK), 595–619 (LGSL…GLLT), 637–661 (LGEL…KKDT), 748–773 (LPCL…VHPG), 823–841 (VKTL…SISN), 842–866 (LRAL…MFKS), 868–890 (ANLK…SLAS), 891–915 (LNAL…GVKG), 917–939 (TSLT…GLQH), and 940–965 (LTAL…IGED).

The protein belongs to the disease resistance NB-LRR family.

In terms of biological role, disease resistance protein. Resistance proteins guard the plant against pathogens that contain an appropriate avirulence protein via a direct or indirect interaction with this avirulence protein. That triggers a defense system which restricts the pathogen growth. In Solanum bulbocastanum (Wild potato), this protein is Putative disease resistance protein RGA1 (RGA1).